The sequence spans 201 residues: Glycerol-3-phosphate acyltransferase (201 aa).

Transmembrane regions (helical) follow at residues 10–30 (MLIGALIFGYVLGSIPFGLIL), 60–80 (LAAATLILDALKGTAAALIAA), 86–106 (AAIAAGFGAFIGHLFPVWIGF), 116–136 (LGVLIGLAWAGALVFAAAWIV), 139–159 (LLTRYSSLSALVASLVVPIAL), and 166–186 (ALAALFAIMTVIVFIKHRANI).

It belongs to the PlsY family. In terms of assembly, probably interacts with PlsX.

It localises to the cell inner membrane. The catalysed reaction is an acyl phosphate + sn-glycerol 3-phosphate = a 1-acyl-sn-glycero-3-phosphate + phosphate. Its pathway is lipid metabolism; phospholipid metabolism. In terms of biological role, catalyzes the transfer of an acyl group from acyl-phosphate (acyl-PO(4)) to glycerol-3-phosphate (G3P) to form lysophosphatidic acid (LPA). This enzyme utilizes acyl-phosphate as fatty acyl donor, but not acyl-CoA or acyl-ACP. The protein is Glycerol-3-phosphate acyltransferase of Brucella ovis (strain ATCC 25840 / 63/290 / NCTC 10512).